The following is a 413-amino-acid chain: E3 ubiquitin ligase ICP22 (413 aa).

The disordered stretch occupies residues 1-124 (MADIPPDPPA…PPRKSKRPRI (124 aa)). The segment covering 62 to 76 (GDLRGGRRRSPRELG) has biased composition (basic and acidic residues). Residues 84 to 97 (SAESTTGTESEGTG) are compositionally biased toward low complexity. At Tyr-189 the chain carries Phosphotyrosine; by host. Disordered regions lie at residues 289 to 334 (LETN…SASG) and 370 to 390 (AERS…PERE). The segment covering 297–309 (SDDEISDATDSDD) has biased composition (acidic residues).

The protein belongs to the herpesviridae ICP22 family. In terms of processing, tyrosine phosphorylated.

The protein localises to the host nucleus. The protein operates within protein modification; protein ubiquitination. Its function is as follows. Functions as an E3 ubiquitin ligase and plays a role in the inhibition of innate immunity by preventing IFN-mediated signaling. Induces the ubiquitination and degradation of host STAT1, STAT2 and IRF9, resulting in the blockade of ISGF3 nuclear translocation. This is E3 ubiquitin ligase ICP22 from Human herpesvirus 2 (strain HG52) (HHV-2).